The following is a 297-amino-acid chain: MPDASDADLLDGQALSQAVRDEVKADIQAWTDDHRPPFLSAVLVGDNPASKAYVRGKEKDAAEVGIETETHHLDADTSQSELLDLVHDLNADASVDGILVQLPLPDHVDERTVIDAVDPSKDVDGFHPENLGRLMRGTPRYIPATPYGIMEMLSRSDIDPESMDAVIVGRSNIVGKPLANLLLRRTANATVTVCHSRTKDLAAHTRRADLLVAAAGQAAFIDADMVKEDAVVIDVGINRVDDPSTDRGYRLVGDVDFEGVRPKARRITPVPGGVGLMTRAMLLKNTLKAARLRATSA.

NADP(+) contacts are provided by residues 169–171, S196, and I237; that span reads GRS.

Belongs to the tetrahydrofolate dehydrogenase/cyclohydrolase family. Homodimer.

It catalyses the reaction (6R)-5,10-methylene-5,6,7,8-tetrahydrofolate + NADP(+) = (6R)-5,10-methenyltetrahydrofolate + NADPH. The catalysed reaction is (6R)-5,10-methenyltetrahydrofolate + H2O = (6R)-10-formyltetrahydrofolate + H(+). It functions in the pathway one-carbon metabolism; tetrahydrofolate interconversion. Functionally, catalyzes the oxidation of 5,10-methylenetetrahydrofolate to 5,10-methenyltetrahydrofolate and then the hydrolysis of 5,10-methenyltetrahydrofolate to 10-formyltetrahydrofolate. The protein is Bifunctional protein FolD of Salinibacter ruber (strain DSM 13855 / M31).